A 179-amino-acid chain; its full sequence is Ribosome maturation factor RimM (179 aa).

The region spanning 102–179 is the PRC barrel domain; it reads DGEYYWYQLE…EMKVDWDADF (78 aa).

The protein belongs to the RimM family. Binds ribosomal protein uS19.

It is found in the cytoplasm. Its function is as follows. An accessory protein needed during the final step in the assembly of 30S ribosomal subunit, possibly for assembly of the head region. Essential for efficient processing of 16S rRNA. May be needed both before and after RbfA during the maturation of 16S rRNA. It has affinity for free ribosomal 30S subunits but not for 70S ribosomes. This Pseudomonas syringae pv. syringae (strain B728a) protein is Ribosome maturation factor RimM.